Consider the following 824-residue polypeptide: Leucine--tRNA ligase (824 aa).

Residues 42-52 carry the 'HIGH' region motif; that stretch reads PYPSGRIHMGH. Positions 581–585 match the 'KMSKS' region motif; the sequence is KMSKS. Lysine 584 is an ATP binding site.

The protein belongs to the class-I aminoacyl-tRNA synthetase family.

It is found in the cytoplasm. The catalysed reaction is tRNA(Leu) + L-leucine + ATP = L-leucyl-tRNA(Leu) + AMP + diphosphate. The protein is Leucine--tRNA ligase of Geobacter metallireducens (strain ATCC 53774 / DSM 7210 / GS-15).